The sequence spans 352 residues: Phosphoribosylformylglycinamidine cyclo-ligase (352 aa).

This sequence belongs to the AIR synthase family.

The protein resides in the cytoplasm. It catalyses the reaction 2-formamido-N(1)-(5-O-phospho-beta-D-ribosyl)acetamidine + ATP = 5-amino-1-(5-phospho-beta-D-ribosyl)imidazole + ADP + phosphate + H(+). The protein operates within purine metabolism; IMP biosynthesis via de novo pathway; 5-amino-1-(5-phospho-D-ribosyl)imidazole from N(2)-formyl-N(1)-(5-phospho-D-ribosyl)glycinamide: step 2/2. The sequence is that of Phosphoribosylformylglycinamidine cyclo-ligase from Hahella chejuensis (strain KCTC 2396).